Consider the following 741-residue polypeptide: Fibrinogen alpha chain (741 aa).

The signal sequence occupies residues 1 to 18 (MIPVTILCVLLCLNLAWA). Gln19 carries the pyrrolidone carboxylic acid modification. Residues 67-506 (CCRMQGIIDD…STRRSYNGKD (440 aa)) adopt a coiled-coil conformation. The tract at residues 270–307 (VAEARGDSSPSHTGKLITSSHRRESPSLVDKTSSASSV) is disordered. Polar residues predominate over residues 277-288 (SSPSHTGKLITS). An intrachain disulfide couples Cys310 to Cys341. 2 stretches are compositionally biased toward low complexity: residues 381-398 (STSS…HVTG) and 435-449 (SASH…SSSS). The interval 381–510 (STSSRHSIGS…SYNGKDCDDI (130 aa)) is disordered. The segment covering 450–459 (FNKGGSTFET) has biased composition (polar residues). One can recognise a Fibrinogen C-terminal domain in the interval 498-739 (TRRSYNGKDC…VVRMKIRPLE (242 aa)). 4 residues coordinate Ca(2+): Asp666, Asp668, Trp670, and Glu672. Cys674 and Cys687 are disulfide-bonded.

As to quaternary structure, heterohexamer; disulfide linked. Contains 2 sets of 3 non-identical chains (alpha, beta and gamma). The 2 heterotrimers are in head to head conformation with the N-termini in a small central domain. Post-translationally, conversion of fibrinogen to fibrin is triggered by thrombin, which cleaves fibrinopeptides A and B from alpha and beta chains, and thus exposes the N-terminal polymerization sites responsible for the formation of the soft clot. The soft clot is converted into the hard clot by factor XIIIA which catalyzes the epsilon-(gamma-glutamyl)lysine cross-linking between gamma chains (stronger) and between alpha chains (weaker) of different monomers. Forms F13A-mediated cross-links between a glutamine and the epsilon-amino group of a lysine residue, forming fibronectin-fibrinogen heteropolymers.

Its subcellular location is the secreted. In terms of biological role, cleaved by the protease thrombin to yield monomers which, together with fibrinogen beta (FGB) and fibrinogen gamma (FGG), polymerize to form an insoluble fibrin matrix. Fibrin has a major function in hemostasis as one of the primary components of blood clots. This chain is Fibrinogen alpha chain (FGA), found in Gallus gallus (Chicken).